The following is a 652-amino-acid chain: DNA ligase (652 aa).

Residues 29 to 33, 78 to 79, and Glu107 contribute to the NAD(+) site; these read DSEYD and SL. Lys109 functions as the N6-AMP-lysine intermediate in the catalytic mechanism. NAD(+) is bound by residues Arg130, Glu164, Lys278, and Lys302. Zn(2+) is bound by residues Cys395, Cys398, Cys413, and Cys418. One can recognise a BRCT domain in the interval 577–652; the sequence is VADAALSGLT…VRDEAWLESL (76 aa).

It belongs to the NAD-dependent DNA ligase family. LigA subfamily. The cofactor is Mg(2+). Requires Mn(2+) as cofactor.

It catalyses the reaction NAD(+) + (deoxyribonucleotide)n-3'-hydroxyl + 5'-phospho-(deoxyribonucleotide)m = (deoxyribonucleotide)n+m + AMP + beta-nicotinamide D-nucleotide.. DNA ligase that catalyzes the formation of phosphodiester linkages between 5'-phosphoryl and 3'-hydroxyl groups in double-stranded DNA using NAD as a coenzyme and as the energy source for the reaction. It is essential for DNA replication and repair of damaged DNA. The chain is DNA ligase from Streptococcus pneumoniae (strain 70585).